The following is a 177-amino-acid chain: Large ribosomal subunit protein uL5 (177 aa).

It belongs to the universal ribosomal protein uL5 family. In terms of assembly, part of the 50S ribosomal subunit; part of the 5S rRNA/L5/L18/L25 subcomplex. Contacts the 5S rRNA and the P site tRNA. Forms a bridge to the 30S subunit in the 70S ribosome.

This is one of the proteins that bind and probably mediate the attachment of the 5S RNA into the large ribosomal subunit, where it forms part of the central protuberance. In the 70S ribosome it contacts protein S13 of the 30S subunit (bridge B1b), connecting the 2 subunits; this bridge is implicated in subunit movement. Contacts the P site tRNA; the 5S rRNA and some of its associated proteins might help stabilize positioning of ribosome-bound tRNAs. The chain is Large ribosomal subunit protein uL5 from Ehrlichia canis (strain Jake).